The chain runs to 374 residues: Chaperone protein DnaJ (374 aa).

One can recognise a J domain in the interval 5–70 (DFYEILGLGK…QKRDAYDRYG (66 aa)). The segment at 28-47 (LAMKHHPDRNPDSKGAEDKF) is disordered. Basic and acidic residues predominate over residues 35–47 (DRNPDSKGAEDKF). The CR-type zinc finger occupies 134–212 (GYDTTIRVPS…CSGAGKIKRN (79 aa)). Residues Cys147, Cys150, Cys164, Cys167, Cys186, Cys189, Cys200, and Cys203 each coordinate Zn(2+). CXXCXGXG motif repeat units lie at residues 147–154 (CETCDGSG), 164–171 (CTTCGGHG), 186–193 (CPKCHGSG), and 200–207 (CTACSGAG).

Belongs to the DnaJ family. As to quaternary structure, homodimer. It depends on Zn(2+) as a cofactor.

It is found in the cytoplasm. Functionally, participates actively in the response to hyperosmotic and heat shock by preventing the aggregation of stress-denatured proteins and by disaggregating proteins, also in an autonomous, DnaK-independent fashion. Unfolded proteins bind initially to DnaJ; upon interaction with the DnaJ-bound protein, DnaK hydrolyzes its bound ATP, resulting in the formation of a stable complex. GrpE releases ADP from DnaK; ATP binding to DnaK triggers the release of the substrate protein, thus completing the reaction cycle. Several rounds of ATP-dependent interactions between DnaJ, DnaK and GrpE are required for fully efficient folding. Also involved, together with DnaK and GrpE, in the DNA replication of plasmids through activation of initiation proteins. The chain is Chaperone protein DnaJ from Herminiimonas arsenicoxydans.